Consider the following 140-residue polypeptide: Large ribosomal subunit protein bL17 (140 aa).

The interval 119-140 is disordered; it reads DTTAKGQDSGPVQVEEQENEEA.

The protein belongs to the bacterial ribosomal protein bL17 family. As to quaternary structure, part of the 50S ribosomal subunit. Contacts protein L32.

The polypeptide is Large ribosomal subunit protein bL17 (Zymomonas mobilis subsp. mobilis (strain ATCC 31821 / ZM4 / CP4)).